The following is a 619-amino-acid chain: MRVKNFEAWDYVVFAGLFVISSGIGVFFAIKERKKTTSREFLVGGRQMSFGPVALSLTASFMSAVTVLGTPAEVYRFGASFFLFLISYVFVVFFTSELFLPVFYRSGITSTYEYLQLRFNKPVRYAATIIYIVQTILYTGVVVYAPALALNQVTGFNLWASVFATGIVCTFYCSLGGLKAVVWTDAFQMVVMIVGFLTVLIQGSNHVGGFNNVLEKAGNGSRLHIVDFDVDPLRRHTFWTITIGGTFTWLGVYGVNQSTIQRCISCKTEKHAKLALYFNLLGLWIIVACAVFSGLIMYSHFKDCDPWTSGVISAPDQLMPYFVMEIFATMPGLPGLFVACAFSGTLSTVAASINALATVTFEDFVKSCFPHLSDKLSTWISKGLCILFGIMCTSMAVVASLMGSVVQAALSIHGMCGGPMLGLFTLGLVFPFVNWKGALGGLLTGITLSFWVAIGSFIYPAPESKTLPLPLSTEHCVELNITTTVAPQISSRPVLADTWYSLSYLYFSAVGCLGCIAAGIIISFLTGKQRGKDIDPLLIRPVCNLFCFWSKKYKTLCWCGVQHDRETEQDYLDSGSAWKQGVESGLQNGLKQDTLAQIPGYNPKEKSYSNSVPEKTTYF.

At M1–W9 the chain is on the extracellular side. The helical transmembrane segment at D10 to I30 threads the bilayer. The Cytoplasmic segment spans residues K31 to Q47. A helical membrane pass occupies residues M48–L68. At G69 to S80 the chain is on the extracellular side. Residues F81–P101 form a helical membrane-spanning segment. Over V102–T128 the chain is Cytoplasmic. The helical transmembrane segment at I129–A149 threads the bilayer. Topologically, residues L150–N157 are extracellular. A helical membrane pass occupies residues L158–L178. Over K179 to A180 the chain is Cytoplasmic. The helical transmembrane segment at V181–I201 threads the bilayer. Topologically, residues Q202–R235 are extracellular. A glycan (N-linked (GlcNAc...) asparagine) is linked at N219. Residues H236–N256 traverse the membrane as a helical segment. At Q257 to A275 the chain is on the cytoplasmic side. Residues L276–I296 form a helical membrane-spanning segment. At M297–Y321 the chain is on the extracellular side. Residues F322 to F342 traverse the membrane as a helical segment. Residues S343–C385 lie on the Cytoplasmic side of the membrane. The helical transmembrane segment at I386–V406 threads the bilayer. The Extracellular segment spans residues Q407–S411. A helical membrane pass occupies residues I412–F432. The Cytoplasmic segment spans residues V433–G437. A helical membrane pass occupies residues A438 to I458. At Y459 to Y504 the chain is on the extracellular side. N-linked (GlcNAc...) asparagine glycosylation is present at N480. A helical membrane pass occupies residues L505–L525. The Cytoplasmic segment spans residues T526–F619.

Belongs to the sodium:solute symporter (SSF) (TC 2.A.21) family. In terms of tissue distribution, expressed in the cortical region of the kidney corresponding to the proximal tubule. Expressed in Mueller cells of the inner retina (at protein level). Isoform 1 is expressed in the retina, kidney, small intestine and skeletal muscle. Isoform 2 is not detected in the kidney, small intestine and skeletal muscle. In the kidney, expressed predominantly in tubular epithelial cells of the cortical region and in the convoluted portions of the proximal tubule (pars convoluta). In the small intestine, its expression is highest in the proximal part and gradually decreased towards the distal end. Expressed in the neural retina. Not detected in the caecum and colon.

The protein localises to the apical cell membrane. The catalysed reaction is (S)-lactate(out) + Na(+)(out) = (S)-lactate(in) + Na(+)(in). It catalyses the reaction nicotinate(out) + Na(+)(out) = nicotinate(in) + Na(+)(in). The enzyme catalyses pyruvate(out) + Na(+)(out) = pyruvate(in) + Na(+)(in). It carries out the reaction propanoate(out) + Na(+)(out) = propanoate(in) + Na(+)(in). The catalysed reaction is butanoate(out) + Na(+)(out) = butanoate(in) + Na(+)(in). It catalyses the reaction acetoacetate(out) + Na(+)(out) = acetoacetate(in) + Na(+)(in). Acts as an electroneutral and low-affinity sodium (Na(+))-dependent sodium-coupled solute transporter. Catalyzes the transport across the plasma membrane of many monocarboxylates such as lactate, pyruvate, nicotinate, propionate, butyrate and beta-D-hydroxybutyrate. May be responsible for the first step of reabsorption of monocarboxylates from the lumen of the proximal tubule of the kidney and the small intestine. May play also a role in monocarboxylates transport in the retina. Mediates electroneutral uptake of lactate, with a stoichiometry of 2 Na(+) for each lactate. The sequence is that of Sodium-coupled monocarboxylate transporter 2 (Slc5a12) from Mus musculus (Mouse).